The primary structure comprises 217 residues: 3-oxoadipate CoA-transferase subunit B (217 aa).

Residue E50 is part of the active site.

The protein belongs to the 3-oxoacid CoA-transferase subunit B family. In terms of assembly, heterodimer.

The catalysed reaction is 3-oxoadipate + succinyl-CoA = 3-oxoadipyl-CoA + succinate. Its pathway is aromatic compound metabolism; beta-ketoadipate pathway; acetyl-CoA and succinyl-CoA from 3-oxoadipate: step 1/2. The sequence is that of 3-oxoadipate CoA-transferase subunit B (pcaJ) from Acinetobacter baylyi (strain ATCC 33305 / BD413 / ADP1).